A 67-amino-acid chain; its full sequence is Cold shock protein (67 aa).

A CSD domain is found at 4–64 (GTVKWFNAEK…GAKGPQATGV (61 aa)).

The protein resides in the cytoplasm. This chain is Cold shock protein (csp), found in Arthrobacter globiformis.